A 45-amino-acid polypeptide reads, in one-letter code: Mu-conotoxin-like Cal 12.1.2d (45 aa).

Cystine bridges form between Cys3–Cys16, Cys11–Cys28, Cys18–Cys33, and Cys27–Cys39. Residue Trp17 is modified to 6'-bromotryptophan. Position 23 is a 4-hydroxyproline (Pro23). Residues Trp37 and Trp38 each carry the 6'-bromotryptophan modification. Position 40 is a 4-hydroxyproline (Pro40).

Expressed by the venom duct.

Its subcellular location is the secreted. Its function is as follows. Mu-conotoxins block voltage-gated sodium channels. This toxin reversibly blocks voltage-gated sodium channel in cephalopods, with no alteration in the voltage dependence of sodium conductance or on the kinetics of inactivation. This Californiconus californicus (California cone) protein is Mu-conotoxin-like Cal 12.1.2d.